Here is a 520-residue protein sequence, read N- to C-terminus: Transposase for insertion sequence element IS21-like (520 aa).

An HTH IS21-type domain is found at 13-78 (YMWYKVRELQ…KYEEYVRGTL (66 aa)). An Integrase catalytic domain is found at 136-312 (LPETPYGEYA…VPSEEFAVEK (177 aa)).

It belongs to the transposase IS21/IS408/IS1162 family.

In terms of biological role, involved in the transposition of the insertion sequence. This is Transposase for insertion sequence element IS21-like (tnpA) from Bacteroides fragilis.